Consider the following 238-residue polypeptide: Thrombin-like enzyme collinein-1 (238 aa).

Residues 1–229 (VIGGDECNIN…HLDWIQNIIA (229 aa)) enclose the Peptidase S1 domain. 6 disulfide bridges follow: C7–C141, C28–C44, C78–C236, C120–C190, C152–C169, and C180–C205. Active-site charge relay system residues include H43 and D88. S184 functions as the Charge relay system in the catalytic mechanism.

This sequence belongs to the peptidase S1 family. Snake venom subfamily. As to quaternary structure, monomer. In terms of tissue distribution, expressed by the venom gland.

The protein resides in the secreted. Its activity is regulated as follows. Inhibited by Cu(2+) and, to a lesser extent, by Zn(2+) and Ba(2+). Not inhibited by Ca(2+) and Mg(2+). In terms of biological role, thrombin-like snake venom serine protease. Releases fibrinopeptide A and B in the conversion of fibrinogen to fibrin, with preferential activity on the alpha chain of fibrinogen. Also hydrolyzes N-p-toluensulfonyl arginine ester (TAME) and chromogenic artificial substrates of the blood coagulation cascade: S-2222 for factor Xa, S-2302 for kallikrein and S-2238 for thrombin. When tested in vitro, the recombinant protein does not degrade blood clots, suggesting that this toxin lacks fibrinolytic activity. In addition, it moderately inhibits human Kv10.1/KCNH1/EAG1 currents, with a mechanism independent of its enzymatic activity. It selectively blocks Kv10.1/KCNH1/EAG1 in a time and dose-dependent manner (IC(50)=4.2 uM for native protein and IC(50)=2.5 uM for recombinant protein). It may have a preference in interacting with Kv10.1/KCNH1/EAG1 in its closed state, since the inhibitory effect of the toxin is decreased at more depolarized potentials. Corroboratively, it may have possible antitumor applications, since it reduces the viability of human breast cancer cell line MCF-7, which strongly expresses Kv10.1/KCNH1/EAG1, but does not affect the liver carcinoma and the non-tumorigenic epithelial breast cell lines, which weakly express Kv10.1/KCNH1/EAG1. When tested on peripheral blood mononuclear cells (PBMC), the native protein shows mild cytotoxicity, whereas the recombinant protein does not show any cytotoxicity. Native form is not immununogenic, since it does not induce statistically significant antibody production in mice, whereas recombinant form shows an antibody titer slightly higher than the native form. In vivo, subplantar injection in mice paw induces a discreet paw edema. In addition, intraperitoneal injection of the recombinant protein into mice led to fibrinogen depletion, resulting in the blood incoagulability. The protein is Thrombin-like enzyme collinein-1 of Crotalus durissus collilineatus (Brazilian rattlesnake).